Reading from the N-terminus, the 315-residue chain is Olfactory receptor 4E1 (315 aa).

Over 1-33 (MEEAILLNQTSLVTYFRLRGLSVNHKARIAMFS) the chain is Extracellular. Residue Asn-8 is glycosylated (N-linked (GlcNAc...) asparagine). The helical transmembrane segment at 34–54 (MFLIFYVLTLIGNVLIVITII) threads the bilayer. Over 55-61 (YDHRLHT) the chain is Cytoplasmic. A helical transmembrane segment spans residues 62 to 82 (PMYFFLSNLSFIDVCHSTVTV). Topologically, residues 83 to 101 (PKMLRDVWSEEKLISFDAC) are extracellular. Cys-101 and Cys-183 are oxidised to a cystine. Residues 102-122 (VTQMFFLHLFACTEIFLLTVM) traverse the membrane as a helical segment. Over 123 to 143 (AYDRYVAICKPLQYMIVMNWK) the chain is Cytoplasmic. A helical transmembrane segment spans residues 144–164 (VCVLLAVALWTGGTIHSIALT). Topologically, residues 165–208 (SLTIKLPYCGPDEIDNFFCDVPQVIKLACIDTHVIEILIVSNSG) are extracellular. A helical transmembrane segment spans residues 209-229 (LISVVCFVVLVVSYAVILVSL). The Cytoplasmic segment spans residues 230-240 (RQQISKGKRKA). Residues 241–261 (LSTCAAHLTVVTLFLGHCIFI) traverse the membrane as a helical segment. The Extracellular segment spans residues 262–272 (YSRPSTSLPED). The chain crosses the membrane as a helical span at residues 273 to 293 (KVVSVFFTAVTPLLNPIIYTL). The Cytoplasmic segment spans residues 294–315 (RNEEMKSALNKLVGRKERKEEK).

The protein belongs to the G-protein coupled receptor 1 family.

The protein localises to the cell membrane. In terms of biological role, odorant receptor. The polypeptide is Olfactory receptor 4E1 (OR4E1) (Homo sapiens (Human)).